Here is a 126-residue protein sequence, read N- to C-terminus: Small ribosomal subunit protein eS6 (126 aa).

This sequence belongs to the eukaryotic ribosomal protein eS6 family.

This is Small ribosomal subunit protein eS6 from Methanothermobacter thermautotrophicus (strain ATCC 29096 / DSM 1053 / JCM 10044 / NBRC 100330 / Delta H) (Methanobacterium thermoautotrophicum).